Reading from the N-terminus, the 195-residue chain is Protein GrpE (195 aa).

Belongs to the GrpE family. In terms of assembly, homodimer.

The protein localises to the cytoplasm. Its function is as follows. Participates actively in the response to hyperosmotic and heat shock by preventing the aggregation of stress-denatured proteins, in association with DnaK and GrpE. It is the nucleotide exchange factor for DnaK and may function as a thermosensor. Unfolded proteins bind initially to DnaJ; upon interaction with the DnaJ-bound protein, DnaK hydrolyzes its bound ATP, resulting in the formation of a stable complex. GrpE releases ADP from DnaK; ATP binding to DnaK triggers the release of the substrate protein, thus completing the reaction cycle. Several rounds of ATP-dependent interactions between DnaJ, DnaK and GrpE are required for fully efficient folding. The sequence is that of Protein GrpE from Blochmanniella pennsylvanica (strain BPEN).